The sequence spans 394 residues: 3-phenylpropionate/cinnamic acid dioxygenase ferredoxin--NAD(+) reductase component (394 aa).

Position 5–36 (5–36 (TFIIVGAGQAGAMAAATLRQQQFDGDIILIGK)) interacts with FAD. Residue 146-174 (RILIVGGGVIGLELAATSCELGANVTVIE) participates in NAD(+) binding.

The protein belongs to the bacterial ring-hydroxylating dioxygenase ferredoxin reductase family. In terms of assembly, this dioxygenase system consists of four proteins: the two subunits of the hydroxylase component (HcaE and HcaF), a ferredoxin (HcaC) and a ferredoxin reductase (HcaD). It depends on FAD as a cofactor.

The catalysed reaction is 2 reduced [2Fe-2S]-[ferredoxin] + NAD(+) + H(+) = 2 oxidized [2Fe-2S]-[ferredoxin] + NADH. It participates in aromatic compound metabolism; 3-phenylpropanoate degradation. Part of the multicomponent 3-phenylpropionate dioxygenase, that converts 3-phenylpropionic acid (PP) and cinnamic acid (CI) into 3-phenylpropionate-dihydrodiol (PP-dihydrodiol) and cinnamic acid-dihydrodiol (CI-dihydrodiol), respectively. The polypeptide is 3-phenylpropionate/cinnamic acid dioxygenase ferredoxin--NAD(+) reductase component (Photorhabdus laumondii subsp. laumondii (strain DSM 15139 / CIP 105565 / TT01) (Photorhabdus luminescens subsp. laumondii)).